The following is a 93-amino-acid chain: Protein S100-A8 (93 aa).

EF-hand domains lie at 12-47 and 46-81; these read IIDV…QYIR and IRKK…MGVA. Zn(2+) is bound by residues His-17 and His-27. Residue Asp-33 coordinates Ca(2+). Position 42 is an S-nitrosocysteine (Cys-42). Ca(2+) is bound by residues Asp-59, Asn-61, Asp-63, and Glu-70. Zn(2+) contacts are provided by His-83 and His-87.

This sequence belongs to the S-100 family. In terms of assembly, homodimer. Preferentially exists as a heterodimer or heterotetramer with S100A9 known as calprotectin (S100A8/A9). S100A8 interacts with AGER, ATP2A2 and with the heterodimeric complex formed by TLR4 and LY96. Interacts with GAPDH. Calprotectin (S100A8/9) interacts with CEACAM3 and tubulin filaments in a calcium-dependent manner. Heterotetrameric calprotectin (S100A8/A9) interacts with ANXA6 and associates with tubulin filaments in activated monocytes. S100A8 and calprotectin (S100A8/9) interact with NCF2/P67PHOX, RAC1 and RAC2. Calprotectin (S100A8/9) interacts with CYBA and CYBB. Calprotectin (S100A8/9) interacts with NOS2 to form the iNOS-S100A8/A9 transnitrosylase complex; induced by LDL(ox). Calprotectin (S100A8/9) interacts with CD69. As to expression, calprotectin (S100A8/9) is predominantly expressed in myeloid cells. Except for inflammatory conditions, the expression is restricted to a specific stage of myeloid differentiation since both proteins are expressed in circulating neutrophils and monocytes but are absent in normal tissue macrophages and lymphocytes. Under chronic inflammatory conditions, such as psoriasis and malignant disorders, also expressed in the epidermis. Found in high concentrations at local sites of inflammation or in the serum of patients with inflammatory diseases such as rheumatoid, cystic fibrosis, inflammatory bowel disease, Crohn's disease, giant cell arteritis, cystic fibrosis, Sjogren's syndrome, systemic lupus erythematosus, and progressive systemic sclerosis. Involved in the formation and deposition of amyloids in the aging prostate known as corpora amylacea inclusions. Strongly up-regulated in many tumors, including gastric, esophageal, colon, pancreatic, bladder, ovarian, thyroid, breast and skin cancers.

The protein resides in the secreted. It is found in the cytoplasm. The protein localises to the cytoskeleton. Its subcellular location is the cell membrane. Calprotectin (S100A8/A9) activity on TLR4 signaling is inhibited by paquinimod. Functionally, S100A8 is a calcium- and zinc-binding protein which plays a prominent role in the regulation of inflammatory processes and immune response. It can induce neutrophil chemotaxis and adhesion. Predominantly found as calprotectin (S100A8/A9) which has a wide plethora of intra- and extracellular functions. The intracellular functions include: facilitating leukocyte arachidonic acid trafficking and metabolism, modulation of the tubulin-dependent cytoskeleton during migration of phagocytes and activation of the neutrophilic NADPH-oxidase. Also participates in regulatory T-cell differentiation together with CD69. Activates NADPH-oxidase by facilitating the enzyme complex assembly at the cell membrane, transferring arachidonic acid, an essential cofactor, to the enzyme complex and S100A8 contributes to the enzyme assembly by directly binding to NCF2/P67PHOX. The extracellular functions involve pro-inflammatory, antimicrobial, oxidant-scavenging and apoptosis-inducing activities. Its pro-inflammatory activity includes recruitment of leukocytes, promotion of cytokine and chemokine production, and regulation of leukocyte adhesion and migration. Acts as an alarmin or a danger associated molecular pattern (DAMP) molecule and stimulates innate immune cells via binding to pattern recognition receptors such as Toll-like receptor 4 (TLR4) and receptor for advanced glycation endproducts (AGER). Binding to TLR4 and AGER activates the MAP-kinase and NF-kappa-B signaling pathways resulting in the amplification of the pro-inflammatory cascade. Has antimicrobial activity towards bacteria and fungi and exerts its antimicrobial activity probably via chelation of Zn(2+) which is essential for microbial growth. Can induce cell death via autophagy and apoptosis and this occurs through the cross-talk of mitochondria and lysosomes via reactive oxygen species (ROS) and the process involves BNIP3. Can regulate neutrophil number and apoptosis by an anti-apoptotic effect; regulates cell survival via ITGAM/ITGB and TLR4 and a signaling mechanism involving MEK-ERK. Its role as an oxidant scavenger has a protective role in preventing exaggerated tissue damage by scavenging oxidants. Can act as a potent amplifier of inflammation in autoimmunity as well as in cancer development and tumor spread. The iNOS-S100A8/A9 transnitrosylase complex directs selective inflammatory stimulus-dependent S-nitrosylation of GAPDH and probably multiple targets such as ANXA5, EZR, MSN and VIM by recognizing a [IL]-x-C-x-x-[DE] motif; S100A8 seems to contribute to S-nitrosylation site selectivity. Its function is as follows. (Microbial infection) Upon infection by human coronavirus SARS-CoV-2, may induce expansion of aberrant immature neutrophils in a TLR4-dependent manner. This chain is Protein S100-A8, found in Homo sapiens (Human).